The chain runs to 101 residues: NAD(P)H-quinone oxidoreductase subunit 4L, chloroplastic (101 aa).

3 consecutive transmembrane segments (helical) span residues 2-22 (MLEH…YGLI), 32-52 (MCLE…SDLF), and 61-81 (IFSI…PAIV).

This sequence belongs to the complex I subunit 4L family. As to quaternary structure, NDH is composed of at least 16 different subunits, 5 of which are encoded in the nucleus.

It localises to the plastid. The protein resides in the chloroplast thylakoid membrane. The enzyme catalyses a plastoquinone + NADH + (n+1) H(+)(in) = a plastoquinol + NAD(+) + n H(+)(out). It carries out the reaction a plastoquinone + NADPH + (n+1) H(+)(in) = a plastoquinol + NADP(+) + n H(+)(out). Functionally, NDH shuttles electrons from NAD(P)H:plastoquinone, via FMN and iron-sulfur (Fe-S) centers, to quinones in the photosynthetic chain and possibly in a chloroplast respiratory chain. The immediate electron acceptor for the enzyme in this species is believed to be plastoquinone. Couples the redox reaction to proton translocation, and thus conserves the redox energy in a proton gradient. The sequence is that of NAD(P)H-quinone oxidoreductase subunit 4L, chloroplastic from Nymphaea alba (White water-lily).